Consider the following 151-residue polypeptide: Large ribosomal subunit protein uL15 (151 aa).

A disordered region spans residues 1 to 57; it reads MTLRLDSLKANKGARRRKLRKGRGIAAGQGASCGFGMRGQKSRSGRPTRPGFEGGQM. Positions 12–23 are enriched in basic residues; that stretch reads KGARRRKLRKGR. A compositionally biased stretch (gly residues) spans 25–37; that stretch reads IAAGQGASCGFGM.

It belongs to the universal ribosomal protein uL15 family. Part of the 50S ribosomal subunit.

Its function is as follows. Binds to the 23S rRNA. This Synechococcus sp. (strain CC9902) protein is Large ribosomal subunit protein uL15.